The following is a 93-amino-acid chain: PqqA binding protein (93 aa).

This sequence belongs to the PqqD family. Monomer. Interacts with PqqE.

It functions in the pathway cofactor biosynthesis; pyrroloquinoline quinone biosynthesis. Functions as a PqqA binding protein and presents PqqA to PqqE, in the pyrroloquinoline quinone (PQQ) biosynthetic pathway. The chain is PqqA binding protein from Methylococcus capsulatus (strain ATCC 33009 / NCIMB 11132 / Bath).